The chain runs to 119 residues: Ribonuclease P protein component (119 aa).

It belongs to the RnpA family. Consists of a catalytic RNA component (M1 or rnpB) and a protein subunit.

The enzyme catalyses Endonucleolytic cleavage of RNA, removing 5'-extranucleotides from tRNA precursor.. RNaseP catalyzes the removal of the 5'-leader sequence from pre-tRNA to produce the mature 5'-terminus. It can also cleave other RNA substrates such as 4.5S RNA. The protein component plays an auxiliary but essential role in vivo by binding to the 5'-leader sequence and broadening the substrate specificity of the ribozyme. This chain is Ribonuclease P protein component, found in Escherichia fergusonii (strain ATCC 35469 / DSM 13698 / CCUG 18766 / IAM 14443 / JCM 21226 / LMG 7866 / NBRC 102419 / NCTC 12128 / CDC 0568-73).